The primary structure comprises 312 residues: Pre-mRNA-splicing factor 38A (312 aa).

The segment at 1–179 is N-terminal protein interaction domain; sequence MANRTVKDAH…VLEETEQLDP (179 aa). The interval 180–312 is disordered; the sequence is RVSALEEDMD…SHKKSRRGNE (133 aa). The segment covering 184-201 has biased composition (acidic residues); the sequence is LEEDMDDVESSEEEEDDD. Residues 202-223 show a composition bias toward basic and acidic residues; sequence EKGRDPSPEHHRRNYRDLDRPR. 2 stretches are compositionally biased toward basic residues: residues 224–294 and 301–312; these read RSPS…RSHS and KKSHKKSRRGNE.

Belongs to the PRP38 family. In terms of assembly, component of the spliceosome B complex.

The protein resides in the nucleus. Involved in pre-mRNA splicing as a component of the spliceosome. The chain is Pre-mRNA-splicing factor 38A (prpf38a) from Xenopus laevis (African clawed frog).